Reading from the N-terminus, the 308-residue chain is C-4 methylsterol oxidase (308 aa).

The chain crosses the membrane as a helical span at residues 56–76; it reads LLFFLTHEIFYFGRCLPWAII. Residues 145–282 form the Fatty acid hydroxylase domain; that stretch reads WAVFFVLEDT…FRWWDFILDT (138 aa). The Histidine box-1 motif lies at 160-164; the sequence is HRGLH. The short motif at 173–177 is the Histidine box-2 element; that stretch reads HKQHH. Residues 257–263 carry the Histidine box-3 motif; the sequence is HHDEHHH.

This sequence belongs to the sterol desaturase family. It depends on Fe cation as a cofactor.

Its subcellular location is the endoplasmic reticulum membrane. The enzyme catalyses 4,4-dimethyl-5alpha-cholest-7-en-3beta-ol + 6 Fe(II)-[cytochrome b5] + 3 O2 + 5 H(+) = 4alpha-carboxy-4beta-methyl-5alpha-cholest-7-ene-3beta-ol + 6 Fe(III)-[cytochrome b5] + 4 H2O. It functions in the pathway steroid biosynthesis; zymosterol biosynthesis; zymosterol from lanosterol: step 3/6. Functionally, C-4 methylsterol oxidase; part of the third module of ergosterol biosynthesis pathway that includes the late steps of the pathway. ERG25 is a catalytic component of the C-4 demethylation complex that catalyzes the conversion of 4,4-dimethylfecosterol into fecosterol via 4-methylfecosterol. Catalyzes the three-step monooxygenation required for the demethylation of 4,4-dimethyl and 4alpha-methylsterols. The third module or late pathway involves the ergosterol synthesis itself through consecutive reactions that mainly occur in the endoplasmic reticulum (ER) membrane. Firstly, the squalene synthase ERG9 catalyzes the condensation of 2 farnesyl pyrophosphate moieties to form squalene, which is the precursor of all steroids. Squalene synthase is crucial for balancing the incorporation of farnesyl diphosphate (FPP) into sterol and nonsterol isoprene synthesis. Secondly, the squalene epoxidase ERG1 catalyzes the stereospecific oxidation of squalene to (S)-2,3-epoxysqualene, which is considered to be a rate-limiting enzyme in steroid biosynthesis. Then, the lanosterol synthase ERG7 catalyzes the cyclization of (S)-2,3 oxidosqualene to lanosterol, a reaction that forms the sterol core. In the next steps, lanosterol is transformed to zymosterol through a complex process involving various demethylation, reduction and desaturation reactions. The lanosterol 14-alpha-demethylase ERG11 (also known as CYP51) catalyzes C14-demethylation of lanosterol to produce 4,4'-dimethyl cholesta-8,14,24-triene-3-beta-ol, which is critical for ergosterol biosynthesis. The C-14 reductase ERG24 reduces the C14=C15 double bond of 4,4-dimethyl-cholesta-8,14,24-trienol to produce 4,4-dimethyl-cholesta-8,24-dienol. 4,4-dimethyl-cholesta-8,24-dienol is substrate of the C-4 demethylation complex ERG25-ERG26-ERG27 in which ERG25 catalyzes the three-step monooxygenation required for the demethylation of 4,4-dimethyl and 4alpha-methylsterols, ERG26 catalyzes the oxidative decarboxylation that results in a reduction of the 3-beta-hydroxy group at the C-3 carbon to an oxo group, and ERG27 is responsible for the reduction of the keto group on the C-3. ERG28 has a role as a scaffold to help anchor ERG25, ERG26 and ERG27 to the endoplasmic reticulum and ERG29 regulates the activity of the iron-containing C4-methylsterol oxidase ERG25. Then, the sterol 24-C-methyltransferase ERG6 catalyzes the methyl transfer from S-adenosyl-methionine to the C-24 of zymosterol to form fecosterol. The C-8 sterol isomerase ERG2 catalyzes the reaction which results in unsaturation at C-7 in the B ring of sterols and thus converts fecosterol to episterol. The sterol-C5-desaturase ERG3 then catalyzes the introduction of a C-5 double bond in the B ring to produce 5-dehydroepisterol. The C-22 sterol desaturase ERG5 further converts 5-dehydroepisterol into ergosta-5,7,22,24(28)-tetraen-3beta-ol by forming the C-22(23) double bond in the sterol side chain. Finally, ergosta-5,7,22,24(28)-tetraen-3beta-ol is substrate of the C-24(28) sterol reductase ERG4 to produce ergosterol. The chain is C-4 methylsterol oxidase from Candida albicans (strain SC5314 / ATCC MYA-2876) (Yeast).